The sequence spans 718 residues: Kelch-like protein 4 (718 aa).

The segment at 46-69 (TPVQGRLKSHSRDRNGLKKSNSPV) is disordered. Residues 182–249 (CDVLLIAGHL…AYTGVLQLKE (68 aa)) form the BTB domain. 6 Kelch repeats span residues 430-476 (ALYA…VIDN), 477-523 (KLYV…TLEG), 525-570 (MYAV…ALNN), 571-617 (KLYA…TYNG), 619-670 (LYVV…PLGD), and 671-717 (KLYV…VVKL).

As to expression, expressed in adult fibroblasts and in a range of fetal tissues including tongue, palate, and mandible.

It localises to the cytoplasm. It is found in the cytoskeleton. The polypeptide is Kelch-like protein 4 (KLHL4) (Homo sapiens (Human)).